Here is a 659-residue protein sequence, read N- to C-terminus: MFQNNPLLSQLKQQLHDSKPHVEGVVKGTDKAYGFLETDKETFFIAPPAMKKVMHGDKIKATIETIGDKKQADPEELIEPMLTRFIAKVRFNKDKKLQVLADHPNINQPIGAAQTKAVKEELHEGDWVVATLKTHPLRDDRFFYAQIVEFICRAEDEFAPWWVTLARHQQSRYPVQGQDSYKMLDPQTRKDLTALHFVTIDSESTQDMDDALYIEPLEQNGEQTGWKLTVAIADPTAYIAADSQIEKDARQRCFTNYLPGFNIPMLPRELSDELCSLMENETRAALVCRLQTDLQGELQGKPEFLLADVQSKAKLAYNRVSDYLEQAEGAWQPENETTKQQIHWLHRFALTRINWRKTHGLLFKEKPDYSFVLADNGHVQEIKAEYRRIANQIVEESMIVANICCAHYLADNAKTGIFNTHAGFDKKFLPNAHHFLMTNLSNAQNQDELTVRYSVENLATLEGYCRMRHDIEPIDGDYLEFRLRRFLTFAEFKSELAPHFGLGLTGYATWTSPIRKYSDMVNHRLIKACIAEQACLKPSDDILTRLQEARKQNRMVERDIADWLYCRYLADKVENKPEFQAEVQDCMRGGLRVQLLENGASVFVPASTIHPNKEEIQVNSDELAFYINGERRYKIGDIVNIQLTEVKEETRSLIGNLVL.

The RNB domain maps to 189–531 (RKDLTALHFV…NHRLIKACIA (343 aa)). The region spanning 576 to 658 (KPEFQAEVQD…ETRSLIGNLV (83 aa)) is the S1 motif domain.

Belongs to the RNR ribonuclease family. RNase II subfamily.

Its subcellular location is the cytoplasm. It catalyses the reaction Exonucleolytic cleavage in the 3'- to 5'-direction to yield nucleoside 5'-phosphates.. In terms of biological role, involved in mRNA degradation. Hydrolyzes single-stranded polyribonucleotides processively in the 3' to 5' direction. This chain is Exoribonuclease 2, found in Actinobacillus succinogenes (strain ATCC 55618 / DSM 22257 / CCUG 43843 / 130Z).